A 165-amino-acid polypeptide reads, in one-letter code: Large ribosomal subunit protein uL11 (165 aa).

The protein belongs to the universal ribosomal protein uL11 family.

In terms of biological role, binds directly to 26S ribosomal RNA. This Caenorhabditis briggsae protein is Large ribosomal subunit protein uL11 (rpl-12).